The primary structure comprises 227 residues: Exodeoxyribonuclease (227 aa).

The enzyme catalyses Exonucleolytic cleavage in the 3'- to 5'-direction to yield nucleoside 5'-phosphates.. 3'-5' exonuclease that preferentially uses ssDNA as substrate. Plays a role in group I intron homing. May play a role in the final step of host DNA degradation, by scavenging DNA into mononucleotides. This Escherichia coli (Bacteriophage T4) protein is Exodeoxyribonuclease (dexA).